The primary structure comprises 143 residues: Nucleoside diphosphate kinase (143 aa).

The ATP site is built by Lys-11, Phe-59, Arg-87, Thr-93, Arg-104, and Asn-114. His-117 serves as the catalytic Pros-phosphohistidine intermediate.

It belongs to the NDK family. In terms of assembly, homotetramer. Mg(2+) serves as cofactor.

The protein resides in the cytoplasm. It catalyses the reaction a 2'-deoxyribonucleoside 5'-diphosphate + ATP = a 2'-deoxyribonucleoside 5'-triphosphate + ADP. It carries out the reaction a ribonucleoside 5'-diphosphate + ATP = a ribonucleoside 5'-triphosphate + ADP. Its function is as follows. Major role in the synthesis of nucleoside triphosphates other than ATP. The ATP gamma phosphate is transferred to the NDP beta phosphate via a ping-pong mechanism, using a phosphorylated active-site intermediate. The polypeptide is Nucleoside diphosphate kinase (Stutzerimonas stutzeri (strain A1501) (Pseudomonas stutzeri)).